We begin with the raw amino-acid sequence, 199 residues long: Prolactin (199 aa).

A disulfide bridge connects residues C4 and C11. S26 is modified (phosphoserine). An N-linked (GlcNAc...) asparagine; partial glycan is attached at N31. 2 positions are modified to phosphoserine: S34 and S90. 2 disulfide bridges follow: C58/C174 and C191/C199.

This sequence belongs to the somatotropin/prolactin family. In terms of assembly, interacts with PRLR.

Its subcellular location is the secreted. In terms of biological role, prolactin acts primarily on the mammary gland by promoting lactation. The protein is Prolactin (PRL) of Camelus dromedarius (Dromedary).